The following is a 121-amino-acid chain: MADLDVDIVAVEREIWSGKATFVFTRTTSGEIGILPRHIPLVAQLVDDAMVRVEREGEEDLRVAVGGGFMSVTESGVIILAETAELESEINADEARRDSESDDPATAARGRARLRALGQID.

Belongs to the ATPase epsilon chain family. As to quaternary structure, F-type ATPases have 2 components, CF(1) - the catalytic core - and CF(0) - the membrane proton channel. CF(1) has five subunits: alpha(3), beta(3), gamma(1), delta(1), epsilon(1). CF(0) has three main subunits: a, b and c.

It is found in the cell membrane. In terms of biological role, produces ATP from ADP in the presence of a proton gradient across the membrane. This Mycobacterium sp. (strain JLS) protein is ATP synthase epsilon chain.